Consider the following 108-residue polypeptide: uncharacterized protein (108 aa).

A compositionally biased stretch (low complexity) spans 48–73; the sequence is NSNIPSSSSSSPSFASFFSSTSTSAT. A disordered region spans residues 48–81; sequence NSNIPSSSSSSPSFASFFSSTSTSATLNGSSNNK.

This is an uncharacterized protein from Dictyostelium discoideum (Social amoeba).